The following is a 667-amino-acid chain: Holliday junction recognition protein (667 aa).

A disordered region spans residues 78 to 126 (LNGQAPEGDSESSGADTSLEENWPSCSSAMREASGDPRQRQPAVPGNTL). 3 positions are modified to phosphoserine: serine 169, serine 185, and serine 195. Disordered regions lie at residues 181-201 (ISAK…GQGP) and 279-317 (RRRP…EPGK). Residues 279–297 (RRRPSRKQGLHKNRTHCPR) show a composition bias toward basic residues. A phosphoserine mark is found at serine 388, serine 424, serine 449, and serine 462. The interval 443–530 (YRSGSKSPGS…NSEPTGKAVW (88 aa)) is disordered. Residues 466–482 (GREKTERPGEALEDLRG) are compositionally biased toward basic and acidic residues. The segment covering 496 to 515 (SCPSPEGSPSRSPSHSQLSS) has biased composition (low complexity). Residue lysine 554 forms a Glycyl lysine isopeptide (Lys-Gly) (interchain with G-Cter in SUMO2) linkage. Residue serine 567 is modified to Phosphoserine. A disordered region spans residues 596–617 (KRLNPDSPQQSSQKRSISPGCH). Over residues 601 to 611 (DSPQQSSQKRS) the composition is skewed to polar residues. Serine 613 carries the phosphoserine modification.

Interacts with CENPA (via CATD domain); the interaction is direct and specific for CENPA since it does not interact with H3.1- or H3.3-containing nucleosomes. Heterotrimer composed of HJURP, CENPA and histone H4, where HJURP interacts with the dimer formed by CENPA and histone H4 and prevents tetramerization of CENPA and H4. Identified in a centromere complex containing histones H2A, H2B and H4, and at least CENPA, CENPB, CENPC, CENPT, CENPN, HJURP, SUPT16H, SSRP1 and RSF1. Interacts with 14-3-3 family members in a phosphorylation-dependent manner. Interacts with MSH5 and NBN.

It is found in the nucleus. The protein localises to the nucleolus. Its subcellular location is the chromosome. It localises to the centromere. Centromeric protein that plays a central role in the incorporation and maintenance of histone H3-like variant CENPA at centromeres. Acts as a specific chaperone for CENPA and is required for the incorporation of newly synthesized CENPA molecules into nucleosomes at replicated centromeres. Prevents CENPA-H4 tetramerization and prevents premature DNA binding by the CENPA-H4 tetramer. Directly binds Holliday junctions. The sequence is that of Holliday junction recognition protein (Hjurp) from Mus musculus (Mouse).